Consider the following 76-residue polypeptide: Small ribosomal subunit protein bS18 (76 aa).

This sequence belongs to the bacterial ribosomal protein bS18 family. In terms of assembly, part of the 30S ribosomal subunit. Forms a tight heterodimer with protein bS6.

Its function is as follows. Binds as a heterodimer with protein bS6 to the central domain of the 16S rRNA, where it helps stabilize the platform of the 30S subunit. The sequence is that of Small ribosomal subunit protein bS18 from Alkaliphilus metalliredigens (strain QYMF).